Here is an 868-residue protein sequence, read N- to C-terminus: E3 ubiquitin-protein ligase TRIM71 (868 aa).

An N-acetylalanine modification is found at A2. An RING-type zinc finger spans residues 12-89; sequence CLLCKEMCGS…PLKLRCPVCD (78 aa). Positions 26 to 41 are enriched in low complexity; the sequence is SSNSSASSSSSQTSTS. Disordered regions lie at residues 26-50 and 121-186; these read SSNSSASSSSSQTSTSSGGGGGGPG and ADEP…GSPS. A compositionally biased stretch (basic residues) spans 142–153; sequence SNHRHHAHHAHP. A compositionally biased stretch (pro residues) spans 159–176; the sequence is APPPPLPPAPPPPAPPRS. A compositionally biased stretch (low complexity) spans 177–186; the sequence is APGGPAGSPS. A B box-type 1; atypical zinc finger spans residues 191 to 238; sequence RRPHGCSSCDEGNAASSRCLDCQEHLCDNCVRAHQRVRLTKDHYIERG. The B box-type 2 zinc-finger motif lies at 273-314; sequence ERLGFCQHHDDEVLHLYCDTCSVPICRECTVGRHGGHSFVYL. Zn(2+)-binding residues include C278, H281, C301, and H306. Positions 391-427 form a coiled coil; it reads QVKAKSLYLQVEKLRQNLNKLESTISAVQQVLEEGRA. A Filamin repeat occupies 479–580; that stretch reads SSGAFAPLTK…IENSPFKVVV (102 aa). 6 NHL repeats span residues 593-636, 640-683, 687-730, 734-777, 781-824, and 828-868; these read GLSF…FKPC, HHKF…FTFE, LLKF…FGPD, LNKY…IHPD, ARFL…FESN, and LCKF…ILIF.

It belongs to the TRIM/RBCC family. In terms of assembly, interacts (via NHL repeats) with AGO2; the interaction increases in presence of RNA. Interacts with HSP90AA1. Interacts (via NHL repeats) with MOV10, PABPC1, PUM1, PUM2, STAU2, XRN1 and XRN2 in an RNA-dependent manner. Interacts with SHCBP1; leading to enhance its stability. In terms of processing, autoubiquitinated.

The protein resides in the cytoplasm. Its subcellular location is the P-body. The enzyme catalyses S-ubiquitinyl-[E2 ubiquitin-conjugating enzyme]-L-cysteine + [acceptor protein]-L-lysine = [E2 ubiquitin-conjugating enzyme]-L-cysteine + N(6)-ubiquitinyl-[acceptor protein]-L-lysine.. It functions in the pathway protein modification; protein ubiquitination. In terms of biological role, E3 ubiquitin-protein ligase that cooperates with the microRNAs (miRNAs) machinery and promotes embryonic stem cells proliferation and maintenance. Binds to miRNAs and associates with AGO2, participating in post-transcriptional repression of transcripts such as CDKN1A. In addition, participates in post-transcriptional mRNA repression in a miRNA independent mechanism. Facilitates the G1-S transition to promote rapid embryonic stem cell self-renewal by repressing CDKN1A expression. Required to maintain proliferation and prevent premature differentiation of neural progenitor cells during early neural development: positively regulates FGF signaling by controlling the stability of SHCBP1. Specific regulator of miRNA biogenesis. Binds to miRNA MIR29A hairpin and postranscriptionally modulates MIR29A levels, which indirectly regulates TET proteins expression. This is E3 ubiquitin-protein ligase TRIM71 (TRIM71) from Bos taurus (Bovine).